The primary structure comprises 59 residues: RICYNHLGTKPPTTETCQEDSCYKNIWTFDNIIRRGCGCFTPRGDMPGPYCCESDKCNL.

Cystine bridges form between Cys3–Cys22, Cys17–Cys37, Cys39–Cys51, and Cys52–Cys57. Positions 43–45 (RGD) match the Cell attachment site motif.

It belongs to the three-finger toxin family. Short-chain subfamily. Antiplatelet toxin sub-subfamily. Expressed by the venom gland.

It is found in the secreted. In terms of biological role, inhibits ADP-induced platelet aggregation and inhibits the binding of purified platelet fibrinogen receptor alpha-IIb/beta-3 (ITGA2B/ITGB3) to immobilized fibrinogen. Has also been described to inhibit cell adhesion to fibrinogen, fibronectin, laminin and collagen. This is Dendroaspin from Dendroaspis jamesoni kaimosae (Eastern Jameson's mamba).